The chain runs to 993 residues: DNA-binding protein SMUBP-2 (993 aa).

A2 is subject to N-acetylalanine. ATP contacts are provided by residues 214–221 (GPPGTGKT), Q403, Y442, and E571. The interval 638–785 (TAFEYLDDIV…KRRFITVSKR (148 aa)) is SS DNA-binding. Disordered stretches follow at residues 651-723 (YSHE…VESQ), 782-828 (VSKR…PDQP), and 841-879 (VRSA…DLPT). Polar residues-rich tracts occupy residues 653-662 (HENSQGSSHA) and 669-681 (PATS…QRQE). An R3H domain is found at 723–786 (QDGVDHFRAM…RRFITVSKRA (64 aa)). Positions 818-828 (PPREQRGPDQP) are enriched in basic and acidic residues. Residues 842 to 859 (RSAQGQPASKEQQASGQQ) are compositionally biased toward polar residues. Positions 864–868 (KKKKK) match the Nuclear localization signal motif. An AN1-type zinc finger spans residues 891–940 (VKADNTCGFAKCTAGVTTLGQFCQLCSRRYCLSHHLPEIHGCGERARAHA). Zn(2+) contacts are provided by C897, C902, C913, C916, C921, H924, H930, and C932. The tract at residues 971–993 (RRLDKKLSELSNQRTSRRKERGT) is disordered.

This sequence belongs to the DNA2/NAM7 helicase family. As to quaternary structure, homooligomer. Interacts with RUVBL1. Interacts with RUVBL2. Interacts with GTF3C1. Interacts with ABT1. Interacts with ribosomes. In terms of tissue distribution, expressed in all tissues examined. Expressed in the developing and adult human brain, with highest expression in the cerebellum. Moderately expressed in fibroblasts.

Its subcellular location is the nucleus. It localises to the cytoplasm. The protein resides in the cell projection. It is found in the axon. The enzyme catalyses ATP + H2O = ADP + phosphate + H(+). Its function is as follows. 5' to 3' helicase that unwinds RNA and DNA duplexes in an ATP-dependent reaction. Specific to 5'-phosphorylated single-stranded guanine-rich sequences. May play a role in RNA metabolism, ribosome biogenesis or initiation of translation. May play a role in regulation of transcription. Interacts with tRNA-Tyr. This Homo sapiens (Human) protein is DNA-binding protein SMUBP-2 (IGHMBP2).